The chain runs to 95 residues: Protein TusB (95 aa).

It belongs to the DsrH/TusB family. In terms of assembly, heterohexamer, formed by a dimer of trimers. The hexameric TusBCD complex contains 2 copies each of TusB, TusC and TusD. The TusBCD complex interacts with TusE.

It is found in the cytoplasm. Its function is as follows. Part of a sulfur-relay system required for 2-thiolation of 5-methylaminomethyl-2-thiouridine (mnm(5)s(2)U) at tRNA wobble positions. The protein is Protein TusB of Escherichia coli (strain ATCC 8739 / DSM 1576 / NBRC 3972 / NCIMB 8545 / WDCM 00012 / Crooks).